The chain runs to 82 residues: Exodeoxyribonuclease 7 small subunit (82 aa).

Belongs to the XseB family. As to quaternary structure, heterooligomer composed of large and small subunits.

It is found in the cytoplasm. It carries out the reaction Exonucleolytic cleavage in either 5'- to 3'- or 3'- to 5'-direction to yield nucleoside 5'-phosphates.. Bidirectionally degrades single-stranded DNA into large acid-insoluble oligonucleotides, which are then degraded further into small acid-soluble oligonucleotides. The chain is Exodeoxyribonuclease 7 small subunit from Pectobacterium carotovorum subsp. carotovorum (strain PC1).